Here is a 251-residue protein sequence, read N- to C-terminus: Triosephosphate isomerase (251 aa).

9–11 (NWK) provides a ligand contact to substrate. The active-site Electrophile is the His95. The active-site Proton acceptor is the Glu167. Residues Gly173, Ser212, and 233 to 234 (GG) contribute to the substrate site.

The protein belongs to the triosephosphate isomerase family. In terms of assembly, homodimer.

Its subcellular location is the cytoplasm. The catalysed reaction is D-glyceraldehyde 3-phosphate = dihydroxyacetone phosphate. It participates in carbohydrate biosynthesis; gluconeogenesis. Its pathway is carbohydrate degradation; glycolysis; D-glyceraldehyde 3-phosphate from glycerone phosphate: step 1/1. In terms of biological role, involved in the gluconeogenesis. Catalyzes stereospecifically the conversion of dihydroxyacetone phosphate (DHAP) to D-glyceraldehyde-3-phosphate (G3P). The protein is Triosephosphate isomerase of Pseudomonas savastanoi pv. phaseolicola (strain 1448A / Race 6) (Pseudomonas syringae pv. phaseolicola (strain 1448A / Race 6)).